The following is a 336-amino-acid chain: 4-hydroxy-2-oxovalerate aldolase (336 aa).

The Pyruvate carboxyltransferase domain maps to 4–254 (PRLTDTTLRD…NPGLDVLALM (251 aa)). A substrate-binding site is contributed by 12–13 (RD). Asp13 serves as a coordination point for Mn(2+). His16 (proton acceptor) is an active-site residue. 2 residues coordinate substrate: Ser166 and His193. Residues His193 and His195 each coordinate Mn(2+). Residue Tyr284 coordinates substrate.

This sequence belongs to the 4-hydroxy-2-oxovalerate aldolase family.

It carries out the reaction (S)-4-hydroxy-2-oxopentanoate = acetaldehyde + pyruvate. The sequence is that of 4-hydroxy-2-oxovalerate aldolase from Roseiflexus castenholzii (strain DSM 13941 / HLO8).